Consider the following 414-residue polypeptide: Multifunctional CCA protein (414 aa).

Residues G8 and R11 each coordinate ATP. CTP is bound by residues G8 and R11. Mg(2+) is bound by residues D21 and D23. ATP is bound by residues R91, R137, and R140. CTP-binding residues include R91, R137, and R140. The HD domain maps to 228–329; the sequence is TGIHTLLTLA…LKLLDTIDVW (102 aa).

Belongs to the tRNA nucleotidyltransferase/poly(A) polymerase family. Bacterial CCA-adding enzyme type 1 subfamily. Monomer. Can also form homodimers and oligomers. Requires Mg(2+) as cofactor. It depends on Ni(2+) as a cofactor.

It carries out the reaction a tRNA precursor + 2 CTP + ATP = a tRNA with a 3' CCA end + 3 diphosphate. It catalyses the reaction a tRNA with a 3' CCA end + 2 CTP + ATP = a tRNA with a 3' CCACCA end + 3 diphosphate. Its function is as follows. Catalyzes the addition and repair of the essential 3'-terminal CCA sequence in tRNAs without using a nucleic acid template. Adds these three nucleotides in the order of C, C, and A to the tRNA nucleotide-73, using CTP and ATP as substrates and producing inorganic pyrophosphate. tRNA 3'-terminal CCA addition is required both for tRNA processing and repair. Also involved in tRNA surveillance by mediating tandem CCA addition to generate a CCACCA at the 3' terminus of unstable tRNAs. While stable tRNAs receive only 3'-terminal CCA, unstable tRNAs are marked with CCACCA and rapidly degraded. The protein is Multifunctional CCA protein of Edwardsiella ictaluri (strain 93-146).